A 329-amino-acid chain; its full sequence is Fructose-1,6-bisphosphatase class 1 (329 aa).

Positions 84, 103, 105, and 106 each coordinate Mg(2+). Substrate contacts are provided by residues 106 to 109 (DGSS), Asn-196, and Lys-262. Glu-268 contacts Mg(2+).

The protein belongs to the FBPase class 1 family. In terms of assembly, homotetramer. Mg(2+) serves as cofactor.

The protein localises to the cytoplasm. It catalyses the reaction beta-D-fructose 1,6-bisphosphate + H2O = beta-D-fructose 6-phosphate + phosphate. The protein operates within carbohydrate biosynthesis; gluconeogenesis. This is Fructose-1,6-bisphosphatase class 1 from Shewanella pealeana (strain ATCC 700345 / ANG-SQ1).